Reading from the N-terminus, the 385-residue chain is MEYRDPGHPHFPFTIGIEEEYQIIDPETRELKSYITQILDEGQLILREQMKPEMHQSIVEVGTHVCRTVEEARAEIIRLRGAIGSLAASKGLRIAAAGTHPFSSWQKQDIYPHERYYGVIEEMQEAARRLLIFGMHVHIGMPDNETCIEIMNVARYFLPHLLALSTSSPFWMGRKTGFQSYRSIIFTNFPRTGIPDTFQSYAEFEQYINILLKTHSIDNGKKVWWDARPHPMFGTLEVRICDIATKVDEAIMIAGLVQAIFVKIYSLFRQNQTFRVYSRALINENKWRAARYGMGGKLIDFGRREELSAHDLMAELREFVDDVVDDLGSRAAVDYIDQVLKHGTSAERQLRTYEETGDIKAVVDQLIRETMEGVPLDQATQVVSG.

This sequence belongs to the glutamate--cysteine ligase type 2 family. YbdK subfamily.

It catalyses the reaction L-cysteine + L-glutamate + ATP = gamma-L-glutamyl-L-cysteine + ADP + phosphate + H(+). In terms of biological role, ATP-dependent carboxylate-amine ligase which exhibits weak glutamate--cysteine ligase activity. In Herpetosiphon aurantiacus (strain ATCC 23779 / DSM 785 / 114-95), this protein is Putative glutamate--cysteine ligase 2.